A 92-amino-acid chain; its full sequence is MKFEAVVRTEQGKGASRRLRHAGKFPAIVYGGTEAPVSIELIHFDVINQMDKPEFYEAIELVIDGATVKVKPQDVQRHAFKPKVEHMDFIRI.

The protein belongs to the bacterial ribosomal protein bL25 family. Part of the 50S ribosomal subunit; part of the 5S rRNA/L5/L18/L25 subcomplex. Contacts the 5S rRNA. Binds to the 5S rRNA independently of L5 and L18.

In terms of biological role, this is one of the proteins that binds to the 5S RNA in the ribosome where it forms part of the central protuberance. This chain is Large ribosomal subunit protein bL25, found in Aliivibrio salmonicida (strain LFI1238) (Vibrio salmonicida (strain LFI1238)).